Consider the following 407-residue polypeptide: Phosphopentomutase (407 aa).

Mn(2+)-binding residues include Asp10, Asp306, His311, Asp347, His348, and His359.

It belongs to the phosphopentomutase family. Mn(2+) is required as a cofactor.

It is found in the cytoplasm. It carries out the reaction 2-deoxy-alpha-D-ribose 1-phosphate = 2-deoxy-D-ribose 5-phosphate. The enzyme catalyses alpha-D-ribose 1-phosphate = D-ribose 5-phosphate. It functions in the pathway carbohydrate degradation; 2-deoxy-D-ribose 1-phosphate degradation; D-glyceraldehyde 3-phosphate and acetaldehyde from 2-deoxy-alpha-D-ribose 1-phosphate: step 1/2. Its function is as follows. Isomerase that catalyzes the conversion of deoxy-ribose 1-phosphate (dRib-1-P) and ribose 1-phosphate (Rib-1-P) to deoxy-ribose 5-phosphate (dRib-5-P) and ribose 5-phosphate (Rib-5-P), respectively. The protein is Phosphopentomutase of Salmonella gallinarum (strain 287/91 / NCTC 13346).